The sequence spans 30 residues: Kalata-B16 (30 aa).

The cyclopeptide (Gly-Asp) cross-link spans 1–30; that stretch reads GIPCAESCVYIPCTITALLGCKCQDKVCYD. 3 disulfides stabilise this stretch: Cys4–Cys21, Cys8–Cys23, and Cys13–Cys28.

In terms of processing, this is a cyclic peptide.

Functionally, probably participates in a plant defense mechanism. This chain is Kalata-B16, found in Oldenlandia affinis.